Here is a 244-residue protein sequence, read N- to C-terminus: Nonsense-mediated decay protein 4 (244 aa).

Its subcellular location is the cytoplasm. Functionally, involved in nonsense-mediated decay of mRNAs containing premature stop codons. This Candida glabrata (strain ATCC 2001 / BCRC 20586 / JCM 3761 / NBRC 0622 / NRRL Y-65 / CBS 138) (Yeast) protein is Nonsense-mediated decay protein 4 (NMD4).